A 248-amino-acid chain; its full sequence is Glutamine-binding periplasmic protein (248 aa).

An N-terminal signal peptide occupies residues 1–22; the sequence is MKSVLKVSLAALTLAFAVSSHA.

Belongs to the bacterial solute-binding protein 3 family.

It is found in the periplasm. Involved in a glutamine-transport system GlnHPQ. The chain is Glutamine-binding periplasmic protein (glnH) from Escherichia coli O157:H7.